We begin with the raw amino-acid sequence, 431 residues long: Adenylosuccinate synthetase (431 aa).

GTP is bound by residues 13–19 (GDEGKGK) and 41–43 (GHT). The active-site Proton acceptor is aspartate 14. The Mg(2+) site is built by aspartate 14 and glycine 41. Residues 14–17 (DEGK), 39–42 (NAGH), threonine 130, arginine 144, glutamine 225, threonine 240, and arginine 304 contribute to the IMP site. The active-site Proton donor is histidine 42. 300 to 306 (ATTGRKR) contacts substrate. GTP-binding positions include arginine 306, 332–334 (KLD), and 415–417 (STG).

It belongs to the adenylosuccinate synthetase family. In terms of assembly, homodimer. Mg(2+) serves as cofactor.

It is found in the cytoplasm. The catalysed reaction is IMP + L-aspartate + GTP = N(6)-(1,2-dicarboxyethyl)-AMP + GDP + phosphate + 2 H(+). The protein operates within purine metabolism; AMP biosynthesis via de novo pathway; AMP from IMP: step 1/2. Plays an important role in the de novo pathway of purine nucleotide biosynthesis. Catalyzes the first committed step in the biosynthesis of AMP from IMP. The sequence is that of Adenylosuccinate synthetase from Shewanella piezotolerans (strain WP3 / JCM 13877).